Consider the following 328-residue polypeptide: Phenylalanine--tRNA ligase alpha subunit (328 aa).

Glutamate 245 contacts Mg(2+).

Belongs to the class-II aminoacyl-tRNA synthetase family. Phe-tRNA synthetase alpha subunit type 1 subfamily. In terms of assembly, tetramer of two alpha and two beta subunits. Requires Mg(2+) as cofactor.

The protein localises to the cytoplasm. It carries out the reaction tRNA(Phe) + L-phenylalanine + ATP = L-phenylalanyl-tRNA(Phe) + AMP + diphosphate + H(+). This Helicobacter pylori (strain ATCC 700392 / 26695) (Campylobacter pylori) protein is Phenylalanine--tRNA ligase alpha subunit (pheS).